A 217-amino-acid polypeptide reads, in one-letter code: Ribosome maturation factor RimP (217 aa).

The protein belongs to the RimP family.

The protein resides in the cytoplasm. Required for maturation of 30S ribosomal subunits. In Nocardia farcinica (strain IFM 10152), this protein is Ribosome maturation factor RimP.